The following is a 617-amino-acid chain: Phosphatidylinositol-3,5-bisphosphate 3-phosphatase MTMR6 (617 aa).

Residues 1-101 (MEHIRTTKVE…YNSLLQLSKQ (101 aa)) form the GRAM domain. The interaction with RAB1B stretch occupies residues 2–141 (EHIRTTKVEQ…AEYERMGVPN (140 aa)). Y108 bears the Phosphotyrosine mark. Positions 124-499 (GWQLIDLAAE…FNFKFWRNMY (376 aa)) constitute a Myotubularin phosphatase domain. 3 residues coordinate a 1,2-diacyl-sn-glycero-3-phospho-(1D-myo-inositol-3,5-bisphosphate): N248, N273, and I274. The a 1,2-diacyl-sn-glycero-3-phospho-(1D-myo-inositol-3-phosphate) site is built by N248, N273, and I274. The Phosphocysteine intermediate role is filled by C336. Residues S337, D338, G339, W340, D341, R342, K378, and R382 each coordinate a 1,2-diacyl-sn-glycero-3-phospho-(1D-myo-inositol-3,5-bisphosphate). S337, D338, G339, W340, D341, and R342 together coordinate a 1,2-diacyl-sn-glycero-3-phospho-(1D-myo-inositol-3-phosphate). R382 contacts a 1,2-diacyl-sn-glycero-3-phospho-(1D-myo-inositol-3-phosphate). Phosphoserine occurs at positions 557, 585, and 607.

It belongs to the protein-tyrosine phosphatase family. Non-receptor class myotubularin subfamily. Homodimer. Heterodimer (via C-terminus) with MTMR9 (via C-terminus). Interacts with ALKBH4. Interacts with KCNN4. Interacts (via GRAM domain) with RAB1B (in GDP-bound form); the interaction regulates MTMR6 recruitment to the endoplasmic reticulum-Golgi intermediate compartment. As to expression, isoform 1: Ubiquitously expressed including in heart, brain, spleen, lung, liver, muscle, kidney and testis (at protein level). Isoform 2: Expressed in testis (at protein level).

It localises to the cytoplasm. The protein localises to the endoplasmic reticulum-Golgi intermediate compartment. Its subcellular location is the cell projection. The protein resides in the ruffle membrane. It is found in the endoplasmic reticulum. It catalyses the reaction a 1,2-diacyl-sn-glycero-3-phospho-(1D-myo-inositol-3,5-bisphosphate) + H2O = a 1,2-diacyl-sn-glycero-3-phospho-(1D-myo-inositol-5-phosphate) + phosphate. The catalysed reaction is a 1,2-diacyl-sn-glycero-3-phospho-(1D-myo-inositol-3-phosphate) + H2O = a 1,2-diacyl-sn-glycero-3-phospho-(1D-myo-inositol) + phosphate. It carries out the reaction 1,2-dioctanoyl-sn-glycero-3-phospho-(1D-myo-inositol-3,5-bisphosphate) + H2O = 1,2-dioctanoyl-sn-glycero-3-phospho-(1D-myo-inositol-5-phosphate) + phosphate. The enzyme catalyses 1,2-dioctanoyl-sn-glycero-3-phospho-(1-D-myo-inositol-3-phosphate) + H2O = 1,2-dioctanoyl-sn-glycero-3-phospho-(1D-myo-inositol) + phosphate. Its activity is regulated as follows. Allosterically activated by phosphatidylserine and/or phosphatidylinositol 4-phosphate (PtdIns(4)P), and phosphatidylinositol 5-phosphate (PtdIns(5)P). Interaction with MTMR9 increases catalytic activity towards phosphatidylinositol 3,5-bisphosphate. Functionally, lipid phosphatase that specifically dephosphorylates the D-3 position of phosphatidylinositol 3-phosphate and phosphatidylinositol 3,5-bisphosphate, generating phosphatidylinositol and phosphatidylinositol 5-phosphate. Binds with high affinity to phosphatidylinositol 3,5-bisphosphate (PtdIns(3,5)P2) but also to phosphatidylinositol 3-phosphate (PtdIns(3)P), phosphatidylinositol 4-phosphate (PtdIns(4)P), and phosphatidylinositol 5-phosphate (PtdIns(5)P), phosphatidic acid and phosphatidylserine. Negatively regulates ER-Golgi protein transport. Probably in association with MTMR9, plays a role in the late stages of macropinocytosis by dephosphorylating phosphatidylinositol 3-phosphate in membrane ruffles. Acts as a negative regulator of KCNN4/KCa3.1 channel activity in CD4(+) T-cells possibly by decreasing intracellular levels of phosphatidylinositol 3-phosphate. Negatively regulates proliferation of reactivated CD4(+) T-cells. In complex with MTMR9, negatively regulates DNA damage-induced apoptosis. The formation of the MTMR6-MTMR9 complex stabilizes both MTMR6 and MTMR9 protein levels. The sequence is that of Phosphatidylinositol-3,5-bisphosphate 3-phosphatase MTMR6 from Mus musculus (Mouse).